A 438-amino-acid polypeptide reads, in one-letter code: UPF0229 protein Smed_1028 (438 aa).

The tract at residues proline 55–glutamine 107 is disordered. Positions arginine 92–threonine 105 are enriched in gly residues.

Belongs to the UPF0229 family.

In Sinorhizobium medicae (strain WSM419) (Ensifer medicae), this protein is UPF0229 protein Smed_1028.